The primary structure comprises 297 residues: Bifunctional protein FolD (297 aa).

NADP(+) contacts are provided by residues 168–170 (GRG), T195, and V236.

This sequence belongs to the tetrahydrofolate dehydrogenase/cyclohydrolase family. As to quaternary structure, homodimer.

The enzyme catalyses (6R)-5,10-methylene-5,6,7,8-tetrahydrofolate + NADP(+) = (6R)-5,10-methenyltetrahydrofolate + NADPH. The catalysed reaction is (6R)-5,10-methenyltetrahydrofolate + H2O = (6R)-10-formyltetrahydrofolate + H(+). It participates in one-carbon metabolism; tetrahydrofolate interconversion. Its function is as follows. Catalyzes the oxidation of 5,10-methylenetetrahydrofolate to 5,10-methenyltetrahydrofolate and then the hydrolysis of 5,10-methenyltetrahydrofolate to 10-formyltetrahydrofolate. In Bifidobacterium animalis subsp. lactis (strain AD011), this protein is Bifunctional protein FolD.